We begin with the raw amino-acid sequence, 181 residues long: NADH-quinone oxidoreductase subunit B (181 aa).

The [4Fe-4S] cluster site is built by cysteine 45, cysteine 46, cysteine 111, and cysteine 140.

The protein belongs to the complex I 20 kDa subunit family. As to quaternary structure, NDH-1 is composed of 14 different subunits. Subunits NuoB, C, D, E, F, and G constitute the peripheral sector of the complex. The cofactor is [4Fe-4S] cluster.

Its subcellular location is the cell inner membrane. It carries out the reaction a quinone + NADH + 5 H(+)(in) = a quinol + NAD(+) + 4 H(+)(out). NDH-1 shuttles electrons from NADH, via FMN and iron-sulfur (Fe-S) centers, to quinones in the respiratory chain. The immediate electron acceptor for the enzyme in this species is believed to be a menaquinone. Couples the redox reaction to proton translocation (for every two electrons transferred, four hydrogen ions are translocated across the cytoplasmic membrane), and thus conserves the redox energy in a proton gradient. In Flavobacterium psychrophilum (strain ATCC 49511 / DSM 21280 / CIP 103535 / JIP02/86), this protein is NADH-quinone oxidoreductase subunit B.